Here is a 75-residue protein sequence, read N- to C-terminus: Putative membrane protein insertion efficiency factor (75 aa).

It belongs to the UPF0161 family.

It is found in the cell inner membrane. Could be involved in insertion of integral membrane proteins into the membrane. The sequence is that of Putative membrane protein insertion efficiency factor from Leptospira biflexa serovar Patoc (strain Patoc 1 / ATCC 23582 / Paris).